Here is a 195-residue protein sequence, read N- to C-terminus: dCTP deaminase (195 aa).

DCTP-binding positions include 105 to 110 (RSSLGR), D123, 131 to 133 (TLE), Q152, Y166, K173, and Q177. Residue E133 is the Proton donor/acceptor of the active site. Positions 159 to 195 (KTPADRPYGAERGSKYQGQSGPQASKIQGDREFGGDQ) are disordered. Basic and acidic residues predominate over residues 160 to 172 (TPADRPYGAERGS). The span at 174–184 (YQGQSGPQASK) shows a compositional bias: polar residues. Basic and acidic residues predominate over residues 186-195 (QGDREFGGDQ).

The protein belongs to the dCTP deaminase family. Homotrimer.

It catalyses the reaction dCTP + H2O + H(+) = dUTP + NH4(+). It participates in pyrimidine metabolism; dUMP biosynthesis; dUMP from dCTP (dUTP route): step 1/2. In terms of biological role, catalyzes the deamination of dCTP to dUTP. In Haloarcula marismortui (strain ATCC 43049 / DSM 3752 / JCM 8966 / VKM B-1809) (Halobacterium marismortui), this protein is dCTP deaminase.